The sequence spans 244 residues: Flagellar brake protein YcgR (244 aa).

The PilZ domain occupies 112–230 (QRRRYFRISA…ERQLQRIIFS (119 aa)).

It belongs to the YcgR family. In terms of assembly, monomer. Interacts with MotA in the flagellar basal bodies. In another study it was not seen to interact with MotA, but instead with FliM and FliG, also in the flagellar basal body.

The protein localises to the bacterial flagellum basal body. Functionally, acts as a flagellar brake, regulating swimming and swarming in a bis-(3'-5') cyclic diguanylic acid (c-di-GMP)-dependent manner. When bound to c-di-GMP it binds to elements of the flagellar motor (MotA and/or FliG and FliM, binding to FliM also occurs in the absence of c-di-GMP), causing the motor to slow down. Thus, increasing levels of c-di-GMP lead to decreased motility. Probably binds 1 c-di-GMP dimer per subunit. The protein is Flagellar brake protein YcgR (ycgR) of Escherichia coli (strain K12).